Here is a 340-residue protein sequence, read N- to C-terminus: HPr kinase/phosphorylase (340 aa).

Residues His-153 and Lys-174 contribute to the active site. 168–175 provides a ligand contact to ATP; that stretch reads GNSGLGKS. Ser-175 contributes to the Mg(2+) binding site. Catalysis depends on Asp-192, which acts as the Proton acceptor; for phosphorylation activity. Proton donor; for dephosphorylation activity. The important for the catalytic mechanism of both phosphorylation and dephosphorylation stretch occupies residues 216 to 225; it reads MEIRGLGVVD. A Mg(2+)-binding site is contributed by Glu-217. Arg-258 is a catalytic residue. The interval 279–284 is important for the catalytic mechanism of dephosphorylation; sequence PINPGK.

This sequence belongs to the HPrK/P family. As to quaternary structure, homohexamer. Mg(2+) is required as a cofactor.

It carries out the reaction [HPr protein]-L-serine + ATP = [HPr protein]-O-phospho-L-serine + ADP + H(+). The enzyme catalyses [HPr protein]-O-phospho-L-serine + phosphate + H(+) = [HPr protein]-L-serine + diphosphate. Catalyzes the ATP- as well as the pyrophosphate-dependent phosphorylation of a specific serine residue in HPr, a phosphocarrier protein of the phosphoenolpyruvate-dependent sugar phosphotransferase system (PTS). HprK/P also catalyzes the pyrophosphate-producing, inorganic phosphate-dependent dephosphorylation (phosphorolysis) of seryl-phosphorylated HPr (P-Ser-HPr). The chain is HPr kinase/phosphorylase from Prosthecochloris aestuarii (strain DSM 271 / SK 413).